The following is a 146-amino-acid chain: Large ribosomal subunit protein uL16 (146 aa).

Belongs to the universal ribosomal protein uL16 family. As to quaternary structure, part of the 50S ribosomal subunit.

Its function is as follows. Binds 23S rRNA and is also seen to make contacts with the A and possibly P site tRNAs. In Thermomicrobium roseum (strain ATCC 27502 / DSM 5159 / P-2), this protein is Large ribosomal subunit protein uL16.